The sequence spans 96 residues: Large ribosomal subunit protein uL23 (96 aa).

This sequence belongs to the universal ribosomal protein uL23 family. Part of the 50S ribosomal subunit. Contacts protein L29, and trigger factor when it is bound to the ribosome.

One of the early assembly proteins it binds 23S rRNA. One of the proteins that surrounds the polypeptide exit tunnel on the outside of the ribosome. Forms the main docking site for trigger factor binding to the ribosome. The sequence is that of Large ribosomal subunit protein uL23 from Alkaliphilus metalliredigens (strain QYMF).